A 171-amino-acid chain; its full sequence is Lipoprotein signal peptidase (171 aa).

3 helical membrane passes run 12–32, 67–87, and 93–113; these read WYWV…WVLA, WQRW…TVWL, and SLLK…GNLV. Active-site residues include D123 and D141. Residues 137 to 157 form a helical membrane-spanning segment; the sequence is FNIADSAICIGAVLIIWDAFL.

The protein belongs to the peptidase A8 family.

The protein resides in the cell inner membrane. It catalyses the reaction Release of signal peptides from bacterial membrane prolipoproteins. Hydrolyzes -Xaa-Yaa-Zaa-|-(S,diacylglyceryl)Cys-, in which Xaa is hydrophobic (preferably Leu), and Yaa (Ala or Ser) and Zaa (Gly or Ala) have small, neutral side chains.. It participates in protein modification; lipoprotein biosynthesis (signal peptide cleavage). Functionally, this protein specifically catalyzes the removal of signal peptides from prolipoproteins. This Shewanella baltica (strain OS195) protein is Lipoprotein signal peptidase.